A 398-amino-acid chain; its full sequence is Bifunctional enzyme IspD/IspF (398 aa).

The tract at residues 1 to 234 (MTNSPRTAAI…SRLMAALGDI (234 aa)) is 2-C-methyl-D-erythritol 4-phosphate cytidylyltransferase. A 2-C-methyl-D-erythritol 2,4-cyclodiphosphate synthase region spans residues 235–398 (RTGTGYDVHA…LPWGADGLAG (164 aa)). Positions 241 and 243 each coordinate a divalent metal cation. 4-CDP-2-C-methyl-D-erythritol 2-phosphate contacts are provided by residues 241 to 243 (DVH) and 267 to 268 (HS). His275 serves as a coordination point for a divalent metal cation. 4-CDP-2-C-methyl-D-erythritol 2-phosphate is bound by residues 289–291 (DIG), 365–368 (TTSE), Phe372, and Arg375.

This sequence in the N-terminal section; belongs to the IspD/TarI cytidylyltransferase family. IspD subfamily. The protein in the C-terminal section; belongs to the IspF family. A divalent metal cation is required as a cofactor.

The catalysed reaction is 2-C-methyl-D-erythritol 4-phosphate + CTP + H(+) = 4-CDP-2-C-methyl-D-erythritol + diphosphate. It catalyses the reaction 4-CDP-2-C-methyl-D-erythritol 2-phosphate = 2-C-methyl-D-erythritol 2,4-cyclic diphosphate + CMP. Its pathway is isoprenoid biosynthesis; isopentenyl diphosphate biosynthesis via DXP pathway; isopentenyl diphosphate from 1-deoxy-D-xylulose 5-phosphate: step 2/6. It functions in the pathway isoprenoid biosynthesis; isopentenyl diphosphate biosynthesis via DXP pathway; isopentenyl diphosphate from 1-deoxy-D-xylulose 5-phosphate: step 4/6. Bifunctional enzyme that catalyzes the formation of 4-diphosphocytidyl-2-C-methyl-D-erythritol from CTP and 2-C-methyl-D-erythritol 4-phosphate (MEP) (IspD), and catalyzes the conversion of 4-diphosphocytidyl-2-C-methyl-D-erythritol 2-phosphate (CDP-ME2P) to 2-C-methyl-D-erythritol 2,4-cyclodiphosphate (ME-CPP) with a corresponding release of cytidine 5-monophosphate (CMP) (IspF). The polypeptide is Bifunctional enzyme IspD/IspF (Rhodopseudomonas palustris (strain TIE-1)).